We begin with the raw amino-acid sequence, 492 residues long: N-succinylglutamate 5-semialdehyde dehydrogenase (492 aa).

An NAD(+)-binding site is contributed by 220 to 225; the sequence is GSASTG. Catalysis depends on residues E243 and C277.

The protein belongs to the aldehyde dehydrogenase family. AstD subfamily.

It catalyses the reaction N-succinyl-L-glutamate 5-semialdehyde + NAD(+) + H2O = N-succinyl-L-glutamate + NADH + 2 H(+). It functions in the pathway amino-acid degradation; L-arginine degradation via AST pathway; L-glutamate and succinate from L-arginine: step 4/5. Catalyzes the NAD-dependent reduction of succinylglutamate semialdehyde into succinylglutamate. This Salmonella typhimurium (strain LT2 / SGSC1412 / ATCC 700720) protein is N-succinylglutamate 5-semialdehyde dehydrogenase.